The following is a 378-amino-acid chain: uncharacterized protein (378 aa).

Residues 1 to 11 (MSPMNRQRKNK) are compositionally biased toward basic residues. Residues 1 to 23 (MSPMNRQRKNKSNVLNEKDERPG) form a disordered region.

This is an uncharacterized protein from Caenorhabditis elegans.